The sequence spans 308 residues: Isoaspartyl peptidase/L-asparaginase (308 aa).

M1 carries the N-acetylmethionine modification. T168 (nucleophile) is an active-site residue. Substrate-binding positions include 196-199 (RVGD) and 219-222 (TGHG).

It belongs to the Ntn-hydrolase family. Heterodimer of an alpha and beta chain produced by autocleavage. This heterodimer may then dimerize in turn, giving rise to a heterotetramer. In terms of processing, cleaved into an alpha and beta chain by autocatalysis; this activates the enzyme. The N-terminal residue of the beta subunit is responsible for the nucleophile hydrolase activity.

The protein resides in the cytoplasm. It catalyses the reaction L-asparagine + H2O = L-aspartate + NH4(+). It carries out the reaction Cleavage of a beta-linked Asp residue from the N-terminus of a polypeptide.. In terms of biological role, has both L-asparaginase and beta-aspartyl peptidase activity. May be involved in the production of L-aspartate, which can act as an excitatory neurotransmitter in some brain regions. Is highly active with L-Asp beta-methyl ester. Besides, has catalytic activity toward beta-aspartyl dipeptides and their methyl esters, including beta-L-Asp-L-Phe, beta-L-Asp-L-Phe methyl ester (aspartame), beta-L-Asp-L-Ala, beta-L-Asp-L-Leu and beta-L-Asp-L-Lys. Does not have aspartylglucosaminidase activity and is inactive toward GlcNAc-L-Asn. Likewise, has no activity toward glutamine. The polypeptide is Isoaspartyl peptidase/L-asparaginase (ASRGL1) (Bos taurus (Bovine)).